The following is a 184-amino-acid chain: Photosystem I assembly protein Ycf4 (184 aa).

The next 2 membrane-spanning stretches (helical) occupy residues 21–43 (NFFW…ISSY) and 58–78 (LFVP…FISS).

It belongs to the Ycf4 family.

It is found in the plastid. It localises to the chloroplast thylakoid membrane. Its function is as follows. Seems to be required for the assembly of the photosystem I complex. The chain is Photosystem I assembly protein Ycf4 from Pinus thunbergii (Japanese black pine).